We begin with the raw amino-acid sequence, 194 residues long: Protein GrpE (194 aa).

Belongs to the GrpE family. Homodimer.

The protein resides in the cytoplasm. Its function is as follows. Participates actively in the response to hyperosmotic and heat shock by preventing the aggregation of stress-denatured proteins, in association with DnaK and GrpE. It is the nucleotide exchange factor for DnaK and may function as a thermosensor. Unfolded proteins bind initially to DnaJ; upon interaction with the DnaJ-bound protein, DnaK hydrolyzes its bound ATP, resulting in the formation of a stable complex. GrpE releases ADP from DnaK; ATP binding to DnaK triggers the release of the substrate protein, thus completing the reaction cycle. Several rounds of ATP-dependent interactions between DnaJ, DnaK and GrpE are required for fully efficient folding. The sequence is that of Protein GrpE from Aliivibrio fischeri (strain ATCC 700601 / ES114) (Vibrio fischeri).